The primary structure comprises 459 residues: Argininosuccinate lyase (459 aa).

This sequence belongs to the lyase 1 family. Argininosuccinate lyase subfamily.

The protein resides in the cytoplasm. It carries out the reaction 2-(N(omega)-L-arginino)succinate = fumarate + L-arginine. Its pathway is amino-acid biosynthesis; L-arginine biosynthesis; L-arginine from L-ornithine and carbamoyl phosphate: step 3/3. This chain is Argininosuccinate lyase, found in Staphylococcus aureus (strain USA300).